A 285-amino-acid polypeptide reads, in one-letter code: Probable cobalamin biosynthesis protein CobD (285 aa).

4 helical membrane-spanning segments follow: residues 10 to 32, 45 to 67, 145 to 167, and 266 to 283; these read LIDL…GKVI, YLDF…ILSH, VIAP…RAVN, and VYWI…IILY.

The protein belongs to the CobD/CbiB family.

It is found in the cell membrane. The protein operates within cofactor biosynthesis; adenosylcobalamin biosynthesis. In terms of biological role, converts cobyric acid to cobinamide by the addition of aminopropanol on the F carboxylic group. In Pyrococcus furiosus (strain ATCC 43587 / DSM 3638 / JCM 8422 / Vc1), this protein is Probable cobalamin biosynthesis protein CobD.